The sequence spans 248 residues: Leucyl/phenylalanyl-tRNA--protein transferase (248 aa).

The protein belongs to the L/F-transferase family.

It is found in the cytoplasm. The enzyme catalyses N-terminal L-lysyl-[protein] + L-leucyl-tRNA(Leu) = N-terminal L-leucyl-L-lysyl-[protein] + tRNA(Leu) + H(+). The catalysed reaction is N-terminal L-arginyl-[protein] + L-leucyl-tRNA(Leu) = N-terminal L-leucyl-L-arginyl-[protein] + tRNA(Leu) + H(+). It carries out the reaction L-phenylalanyl-tRNA(Phe) + an N-terminal L-alpha-aminoacyl-[protein] = an N-terminal L-phenylalanyl-L-alpha-aminoacyl-[protein] + tRNA(Phe). Functionally, functions in the N-end rule pathway of protein degradation where it conjugates Leu, Phe and, less efficiently, Met from aminoacyl-tRNAs to the N-termini of proteins containing an N-terminal arginine or lysine. This Rhizorhabdus wittichii (strain DSM 6014 / CCUG 31198 / JCM 15750 / NBRC 105917 / EY 4224 / RW1) (Sphingomonas wittichii) protein is Leucyl/phenylalanyl-tRNA--protein transferase.